Here is a 25-residue protein sequence, read N- to C-terminus: Unknown protein 4 (25 aa).

Residues 1–10 (IEHNAEEIRK) show a composition bias toward basic and acidic residues. The disordered stretch occupies residues 1–25 (IEHNAEEIRKTAIRTAVQNTAQQTK). Over residues 16–25 (AVQNTAQQTK) the composition is skewed to polar residues.

This chain is Unknown protein 4, found in Lonomia obliqua (Moth).